The primary structure comprises 314 residues: Homoserine O-succinyltransferase (314 aa).

Catalysis depends on Cys-142, which acts as the Acyl-thioester intermediate. Lys-163 and Ser-192 together coordinate substrate. Catalysis depends on His-235, which acts as the Proton acceptor. Glu-237 is an active-site residue. Residue Arg-249 coordinates substrate.

This sequence belongs to the MetA family.

It localises to the cytoplasm. It catalyses the reaction L-homoserine + succinyl-CoA = O-succinyl-L-homoserine + CoA. It participates in amino-acid biosynthesis; L-methionine biosynthesis via de novo pathway; O-succinyl-L-homoserine from L-homoserine: step 1/1. Transfers a succinyl group from succinyl-CoA to L-homoserine, forming succinyl-L-homoserine. This is Homoserine O-succinyltransferase from Shewanella woodyi (strain ATCC 51908 / MS32).